A 419-amino-acid chain; its full sequence is Voltage-gated potassium channel subunit beta-1 (419 aa).

Residues 1–52 are disordered; the sequence is MLAARTGAAGSQISEENTKLRRQSGFSVAGKDKSPKKASENAKDSSLSPSGE. Over residues 30–43 the composition is skewed to basic and acidic residues; the sequence is GKDKSPKKASENAK. The NADP(+) site is built by Thr-108, Trp-109, Gln-115, and Asp-137. Tyr-142 serves as the catalytic Proton donor/acceptor. NADP(+) is bound by residues Asn-210, Ser-240, Arg-241, Gln-266, Trp-295, Ser-296, Pro-297, Leu-298, Ala-299, Cys-300, Lys-306, Arg-316, Gly-375, Ser-377, Gln-381, Glu-384, and Asn-385.

It belongs to the shaker potassium channel beta subunit family. Homotetramer. Interaction with tetrameric potassium channel alpha subunits gives rise to a heterooctamer. Identified in potassium channel complexes containing KCNA1, KCNA2, KCNA4, KCNA5, KCNA6, KCNAB1 and KCNAB2. Part of a complex containing KCNA1, KCNA4 and LGI1; interaction with LGI1 inhibits down-regulation of KCNA1 channel activity. Interacts with the dimer formed by GNB1 and GNG2; this enhances KCNA1 binding. Interacts with SQSTM1. As to expression, in brain, expression is most prominent in caudate nucleus, hippocampus and thalamus. Significant expression also detected in amygdala and subthalamic nucleus. Also expressed in both healthy and cardiomyopathic heart. Up to four times more abundant in left ventricle than left atrium.

The protein resides in the cytoplasm. It is found in the membrane. It localises to the cell membrane. It carries out the reaction a primary alcohol + NADP(+) = an aldehyde + NADPH + H(+). It catalyses the reaction a secondary alcohol + NADP(+) = a ketone + NADPH + H(+). Functionally, regulatory subunit of the voltage-gated potassium (Kv) Shaker channels composed of pore-forming and potassium-conducting alpha subunits and of regulatory beta subunits. The beta-1/KCNAB1 cytoplasmic subunit mediates closure of delayed rectifier potassium channels by physically obstructing the pore via its N-terminal domain and increases the speed of channel closure for other family members. Promotes the inactivation of Kv1.1/KCNA1, Kv1.2/KCNA2, Kv1.4/KCNA4, Kv1.5/KCNA5 and Kv1.6/KCNA6 alpha subunit-containing channels. Displays nicotinamide adenine dinucleotide phosphate (NADPH)-dependent aldoketoreductase activity by catalyzing the NADPH-dependent reduction of a variety of endogenous aldehydes and ketones. The binding of NADPH is required for efficient down-regulation of potassium channel activity. Oxidation of the bound NADPH restrains N-terminal domain from blocking the channel, thereby decreasing N-type inactivation of potassium channel activity. In terms of biological role, isoform KvB1.2 shows no effect on KCNA1, KCNA2 or KCNB1. This chain is Voltage-gated potassium channel subunit beta-1, found in Homo sapiens (Human).